We begin with the raw amino-acid sequence, 223 residues long: Urease accessory protein UreF (223 aa).

Belongs to the UreF family. In terms of assembly, ureD, UreF and UreG form a complex that acts as a GTP-hydrolysis-dependent molecular chaperone, activating the urease apoprotein by helping to assemble the nickel containing metallocenter of UreC. The UreE protein probably delivers the nickel.

It is found in the cytoplasm. In terms of biological role, required for maturation of urease via the functional incorporation of the urease nickel metallocenter. In Pseudomonas aeruginosa (strain LESB58), this protein is Urease accessory protein UreF.